Reading from the N-terminus, the 263-residue chain is Thymidylate kinase (263 aa).

A mitochondrion-targeting transit peptide spans 1-51 (MKRICSVSSVQLFSRSFRALASPRSLNYPLQCIKRSSVRMESSNFSSGVRT). ATP is bound at residue 66-74 (GLDRSGKST).

It belongs to the thymidylate kinase family. As to expression, expressed in root, rosette leaves, flower buds, flowers and siliques.

The protein localises to the mitochondrion. It localises to the cytoplasm. It is found in the nucleus. The protein resides in the nucleoplasm. The catalysed reaction is dTMP + ATP = dTDP + ADP. The protein operates within pyrimidine metabolism; dTTP biosynthesis. Functionally, catalyzes the conversion of dTMP to dTDP. Involved in the regulation of DNA replication. Is essential to promote the first division of the zygote. The sequence is that of Thymidylate kinase from Arabidopsis thaliana (Mouse-ear cress).